We begin with the raw amino-acid sequence, 307 residues long: Oxygen-dependent coproporphyrinogen-III oxidase (307 aa).

Ser-99 is a binding site for substrate. A divalent metal cation is bound by residues His-103 and His-113. His-113 functions as the Proton donor in the catalytic mechanism. Position 115–117 (115–117 (NVR)) interacts with substrate. A divalent metal cation-binding residues include His-152 and His-182. Residues 247–282 (YVEFNLVFDRGTLFGLQSGGRTESILLSMPPTAGWR) form an important for dimerization region. 265 to 267 (GGR) is a substrate binding site.

This sequence belongs to the aerobic coproporphyrinogen-III oxidase family. As to quaternary structure, homodimer. The cofactor is a divalent metal cation.

The protein resides in the cytoplasm. The enzyme catalyses coproporphyrinogen III + O2 + 2 H(+) = protoporphyrinogen IX + 2 CO2 + 2 H2O. It functions in the pathway porphyrin-containing compound metabolism; protoporphyrin-IX biosynthesis; protoporphyrinogen-IX from coproporphyrinogen-III (O2 route): step 1/1. In terms of biological role, involved in the heme biosynthesis. Catalyzes the aerobic oxidative decarboxylation of propionate groups of rings A and B of coproporphyrinogen-III to yield the vinyl groups in protoporphyrinogen-IX. The chain is Oxygen-dependent coproporphyrinogen-III oxidase from Burkholderia pseudomallei (strain 1106a).